Reading from the N-terminus, the 358-residue chain is Peptide chain release factor 1 (358 aa).

N5-methylglutamine is present on Q233.

It belongs to the prokaryotic/mitochondrial release factor family. Post-translationally, methylated by PrmC. Methylation increases the termination efficiency of RF1.

It localises to the cytoplasm. Its function is as follows. Peptide chain release factor 1 directs the termination of translation in response to the peptide chain termination codons UAG and UAA. This is Peptide chain release factor 1 from Agathobacter rectalis (strain ATCC 33656 / DSM 3377 / JCM 17463 / KCTC 5835 / VPI 0990) (Eubacterium rectale).